Reading from the N-terminus, the 212-residue chain is Adenylate kinase (212 aa).

10–15 (GAGKGT) is an ATP binding site. The tract at residues 30–59 (STGDMFRAAMANQTEMGTLAKSFIDKGELV) is NMP. AMP is bound by residues threonine 31, arginine 36, 57-59 (ELV), 86-89 (GYPR), and glutamine 93. Residues 127 to 159 (GRIINRKTGETYHKVFNPPADYNEDDYYQREDD) form an LID region. Residues arginine 128 and 137 to 138 (TY) each bind ATP. AMP is bound by residues arginine 156 and arginine 167. ATP is bound at residue glutamine 195.

This sequence belongs to the adenylate kinase family. In terms of assembly, monomer.

Its subcellular location is the cytoplasm. It catalyses the reaction AMP + ATP = 2 ADP. The protein operates within purine metabolism; AMP biosynthesis via salvage pathway; AMP from ADP: step 1/1. Its function is as follows. Catalyzes the reversible transfer of the terminal phosphate group between ATP and AMP. Plays an important role in cellular energy homeostasis and in adenine nucleotide metabolism. This Streptococcus mutans serotype c (strain ATCC 700610 / UA159) protein is Adenylate kinase.